Here is a 346-residue protein sequence, read N- to C-terminus: MSERLVTSNEIGIDSTNEYSLRPEKINEYIGQDKVKERLNIFIKAAQRREEALDHVILYGPPGLGKTTLANIIANEMGGNLKITSGPAIERAGDLAAILTTLNTNDVLFIDEIHRLNRSVEEILYPAMEDYVLDIIIGKGAASKSIRLDLPKFTLIGATTRIGMLSSPLRDRLGVLCSMEYYTDEQLKEIIIRSAEILGCHITEEGAFEIAKRSRGTPRIANRLLKRVRDFAEVLYDNEITEEAAKKSLEILEVDGEGFDRIDNKILEAIIDNFNGGPVGIETLAYFVGEELDTIEDVYEPYLLQKGFIVRTPRGRMATDKAYKHLGRVRFNESKIDSKQCTLFEK.

The segment at 1-182 (MSERLVTSNE…LGVLCSMEYY (182 aa)) is large ATPase domain (RuvB-L). ATP-binding positions include Leu21, Arg22, Gly63, Lys66, Thr67, Thr68, 129–131 (EDY), Arg172, Tyr182, and Arg219. Position 67 (Thr67) interacts with Mg(2+). Positions 183–253 (TDEQLKEIII…AAKKSLEILE (71 aa)) are small ATPAse domain (RuvB-S). Residues 256-346 (GEGFDRIDNK…DSKQCTLFEK (91 aa)) are head domain (RuvB-H). Arg311 and Arg316 together coordinate DNA.

This sequence belongs to the RuvB family. In terms of assembly, homohexamer. Forms an RuvA(8)-RuvB(12)-Holliday junction (HJ) complex. HJ DNA is sandwiched between 2 RuvA tetramers; dsDNA enters through RuvA and exits via RuvB. An RuvB hexamer assembles on each DNA strand where it exits the tetramer. Each RuvB hexamer is contacted by two RuvA subunits (via domain III) on 2 adjacent RuvB subunits; this complex drives branch migration. In the full resolvosome a probable DNA-RuvA(4)-RuvB(12)-RuvC(2) complex forms which resolves the HJ.

The protein resides in the cytoplasm. The catalysed reaction is ATP + H2O = ADP + phosphate + H(+). The RuvA-RuvB-RuvC complex processes Holliday junction (HJ) DNA during genetic recombination and DNA repair, while the RuvA-RuvB complex plays an important role in the rescue of blocked DNA replication forks via replication fork reversal (RFR). RuvA specifically binds to HJ cruciform DNA, conferring on it an open structure. The RuvB hexamer acts as an ATP-dependent pump, pulling dsDNA into and through the RuvAB complex. RuvB forms 2 homohexamers on either side of HJ DNA bound by 1 or 2 RuvA tetramers; 4 subunits per hexamer contact DNA at a time. Coordinated motions by a converter formed by DNA-disengaged RuvB subunits stimulates ATP hydrolysis and nucleotide exchange. Immobilization of the converter enables RuvB to convert the ATP-contained energy into a lever motion, pulling 2 nucleotides of DNA out of the RuvA tetramer per ATP hydrolyzed, thus driving DNA branch migration. The RuvB motors rotate together with the DNA substrate, which together with the progressing nucleotide cycle form the mechanistic basis for DNA recombination by continuous HJ branch migration. Branch migration allows RuvC to scan DNA until it finds its consensus sequence, where it cleaves and resolves cruciform DNA. The chain is Holliday junction branch migration complex subunit RuvB from Clostridium perfringens (strain 13 / Type A).